Consider the following 149-residue polypeptide: Calmodulin (149 aa).

Alanine 2 bears the N-acetylalanine mark. 4 EF-hand domains span residues 8 to 43, 44 to 79, 81 to 116, and 117 to 149; these read EQIA…LGQN, PTEA…KMKD, DSEE…LGEK, and LTDE…MMSK. Aspartate 21, aspartate 23, aspartate 25, threonine 27, glutamate 32, aspartate 57, aspartate 59, asparagine 61, threonine 63, glutamate 68, aspartate 94, aspartate 96, asparagine 98, and glutamate 105 together coordinate Ca(2+). Residue lysine 116 is modified to N6,N6,N6-trimethyllysine. 5 residues coordinate Ca(2+): aspartate 130, aspartate 132, aspartate 134, glutamine 136, and glutamate 141.

This sequence belongs to the calmodulin family.

Its function is as follows. Calmodulin mediates the control of a large number of enzymes, ion channels and other proteins by Ca(2+). Among the enzymes to be stimulated by the calmodulin-Ca(2+) complex are a number of protein kinases and phosphatases. The chain is Calmodulin from Lumbricus rubellus (Humus earthworm).